Here is a 426-residue protein sequence, read N- to C-terminus: Histidine--tRNA ligase (426 aa).

It belongs to the class-II aminoacyl-tRNA synthetase family.

The protein resides in the cytoplasm. The enzyme catalyses tRNA(His) + L-histidine + ATP = L-histidyl-tRNA(His) + AMP + diphosphate + H(+). This is Histidine--tRNA ligase from Saccharolobus shibatae (strain ATCC 51178 / DSM 5389 / JCM 8931 / NBRC 15437 / B12) (Sulfolobus shibatae).